The chain runs to 158 residues: Transcriptional regulator MraZ (158 aa).

2 consecutive SpoVT-AbrB domains span residues 7–66 (KEQH…EPSV) and 95–138 (LDCV…APEK).

The protein belongs to the MraZ family. Forms oligomers.

It is found in the cytoplasm. The protein resides in the nucleoid. This chain is Transcriptional regulator MraZ, found in Prosthecochloris aestuarii (strain DSM 271 / SK 413).